Consider the following 304-residue polypeptide: MNGIIPLWKERGMTSHDCVFKLRKILHTKKVGHTGTLDPEVEGVLPICIGRATKLAEYVTDEGKVYVAEITLGKSTTTEDATGEIIATKDLAEISPEALQSVLTKLTGKITQIPPMFSAVKVNGKKLYEYARAGIEVERPSRQVDIYSLTRLDGLASLNESNPTFQLEISCGKGTYIRTLAVMIGELLGYPAHMSKLERTRSGFFKKEDCFTLSEIDEMMQANDLNFLYPLEKGIESMTKLIIDDEIHAKVLNGALLPKALFVSVENESRVALIFEGKLTAIYKPHPEKKDLWKPEKVIELNEA.

The active-site Nucleophile is Asp-38.

It belongs to the pseudouridine synthase TruB family. Type 1 subfamily.

It carries out the reaction uridine(55) in tRNA = pseudouridine(55) in tRNA. Functionally, responsible for synthesis of pseudouridine from uracil-55 in the psi GC loop of transfer RNAs. In Listeria welshimeri serovar 6b (strain ATCC 35897 / DSM 20650 / CCUG 15529 / CIP 8149 / NCTC 11857 / SLCC 5334 / V8), this protein is tRNA pseudouridine synthase B.